The primary structure comprises 201 residues: 3-isopropylmalate dehydratase small subunit (201 aa).

It belongs to the LeuD family. LeuD type 1 subfamily. In terms of assembly, heterodimer of LeuC and LeuD.

The enzyme catalyses (2R,3S)-3-isopropylmalate = (2S)-2-isopropylmalate. The protein operates within amino-acid biosynthesis; L-leucine biosynthesis; L-leucine from 3-methyl-2-oxobutanoate: step 2/4. Catalyzes the isomerization between 2-isopropylmalate and 3-isopropylmalate, via the formation of 2-isopropylmaleate. The protein is 3-isopropylmalate dehydratase small subunit of Klebsiella pneumoniae (strain 342).